The following is a 378-amino-acid chain: UPF0754 membrane protein BcerKBAB4_0766 (378 aa).

The next 2 helical transmembrane spans lie at 1–21 and 357–377; these read MNIW…GGYT and YLGA…LLFL.

This sequence belongs to the UPF0754 family.

The protein localises to the cell membrane. The protein is UPF0754 membrane protein BcerKBAB4_0766 of Bacillus mycoides (strain KBAB4) (Bacillus weihenstephanensis).